A 314-amino-acid polypeptide reads, in one-letter code: Serine acetyltransferase 1, chloroplastic (314 aa).

Belongs to the transferase hexapeptide repeat family. Homomultimer. Interacts with OASA1 and CYP20-3. Component of the cysteine synthase complex (CSC) composed of two OAS-TL dimers and one SAT hexamer. As to expression, mostly expressed in leaves. Localized in cortex, trichomes and vascular tissues, particularly in phloem.

The protein localises to the plastid. The protein resides in the chloroplast. It is found in the cytoplasm. It carries out the reaction L-serine + acetyl-CoA = O-acetyl-L-serine + CoA. The protein operates within amino-acid biosynthesis; L-cysteine biosynthesis; L-cysteine from L-serine: step 1/2. Serine acetyltransferase which catalyzes the formation of O-acetyl-L-serine from acetyl-CoA and L-serine. Also displays O-acetylserine (thio1)-lyase activity in vitro. May be involved in detoxification process by mediating the production of glutathione. The polypeptide is Serine acetyltransferase 1, chloroplastic (SAT1) (Arabidopsis thaliana (Mouse-ear cress)).